Consider the following 918-residue polypeptide: NEDD4-like E3 ubiquitin-protein ligase WWP1 (918 aa).

The C2 domain occupies M1–K116. Polar residues-rich tracts occupy residues T150–G164, N209–Q219, and S235–G258. 2 disordered regions span residues T150 to P182 and N209 to R360. The segment covering T266–P281 has biased composition (low complexity). WW domains lie at E345–P378, Q377–M410, G452–T485, and E492–N525. The interval E345–N525 is interaction with ERBB4. The interval E345 to K527 is required for interaction with and ubiquitination of AMOTL2. Required for interaction with YAP1. The HECT domain maps to K584–E918. C886 serves as the catalytic Glycyl thioester intermediate.

In terms of assembly, interacts with the Crumbs complex components PALS1 and PATJ; interaction with the Crumbs complex is enhanced by WWP1's interaction with AMOTL2 and facilitates WWP1 localization to the plasma membrane. Interaction with the Crumbs complex promotes WWP1 monoubiquitination of AMOTL2, which activates the Hippo signaling pathway. Binds SCNN1A, SCNN1B, SCNN1G, WBP1, WBP2, DRPLA and adenovirus type 2 PIII. Interacts with TGIF. Binds KLF2 AND HIVEP3. Interacts with RNF11. Interacts with SPART. Interacts with NDFIP1 and NDFIP2; this interaction activates the E3 ubiquitin-protein ligase. Interacts with ERBB4 isoforms JM-B CYT-1 and JM-A CYT-1. Does not interact with ERB4 isoform JMA-A CYT-2. Interacts with SMAD1, SMAD2, SMAD3, SMAD5, SMAD6, SMAD7, TGFBR1 and TGFBR2. Associates with the TGFBR1:TGFBR2 receptor complex in presence of SMAD7. Interacts with SKIL isoform 1. Interacts with TP63 isoform 1 and isoform 2. Interacts (via WW domains) with ARRDC1, ARRDC2 and ARRDC3. In terms of processing, auto-ubiquitinated and ubiquitinated by RNF11.

The protein resides in the cytoplasm. Its subcellular location is the cell membrane. It localises to the nucleus. It is found in the cell junction. The catalysed reaction is S-ubiquitinyl-[E2 ubiquitin-conjugating enzyme]-L-cysteine + [acceptor protein]-L-lysine = [E2 ubiquitin-conjugating enzyme]-L-cysteine + N(6)-ubiquitinyl-[acceptor protein]-L-lysine.. It participates in protein modification; protein ubiquitination. With respect to regulation, activated by NDFIP1- and NDFIP2-binding. Functionally, E3 ubiquitin-protein ligase which accepts ubiquitin from an E2 ubiquitin-conjugating enzyme in the form of a thioester and then directly transfers the ubiquitin to targeted substrates. Ubiquitinates and promotes degradation of SMAD2 in response to TGF-beta signaling, which requires interaction with TGIF. Ubiquitinates ERBB4 isoforms JM-A CYT-1 and JM-B CYT-1, KLF2, KLF5 and TP63 and promotes their proteasomal degradation. Ubiquitinates RNF11 without targeting it for degradation. Ubiquitinates and promotes degradation of TGFBR1; the ubiquitination is enhanced by SMAD7. Ubiquitinates SMAD6 and SMAD7. Activates the Hippo signaling pathway in response to cell contact inhibition and recruitment to the Crumbs complex at the cell membrane. Monoubiquitinates AMOTL2 which facilitates its interaction with and activation of LATS2. LATS2 then phosphorylates YAP1, excluding it from the nucleus and therefore ultimately represses YAP1-driven transcription of target genes. This chain is NEDD4-like E3 ubiquitin-protein ligase WWP1 (Wwp1), found in Mus musculus (Mouse).